Reading from the N-terminus, the 328-residue chain is GTP cyclohydrolase MptA (328 aa).

The protein belongs to the GTP cyclohydrolase IV family. As to quaternary structure, homodimer. It depends on Fe(2+) as a cofactor.

It catalyses the reaction GTP + H2O = 7,8-dihydroneopterin 2',3'-cyclic phosphate + formate + diphosphate + H(+). Its pathway is cofactor biosynthesis; 5,6,7,8-tetrahydromethanopterin biosynthesis. Its function is as follows. Converts GTP to 7,8-dihydro-D-neopterin 2',3'-cyclic phosphate, the first intermediate in the biosynthesis of coenzyme methanopterin. The polypeptide is GTP cyclohydrolase MptA (Methanospirillum hungatei JF-1 (strain ATCC 27890 / DSM 864 / NBRC 100397 / JF-1)).